The following is a 357-amino-acid chain: MKKIAVLAGDGIGPEVMEQALKVLVAVQKKFGFELSFQHADVGGAAIDSHGVALPESTLTLCAESDAILFGSVGGPKWEHLPPAEQPERAALLPLRKHFDLFCNYRPARVFKSLTAACPLRADIIGDGFDILCVRELTSGIYFGTPKGREGAGEDEYAYDTMGYKRSEVRRIAHMAFAAARQRSGKVTSVDKANVLTTMVLWREVVLEVAKEYPDVKLNHIYVDNATMQLVRDPHQFDVMLCGNMFGDIISDEAAMLTGSMGLLASASLNTENFGLFEPAGGSAPDIAGQGIANPIAEILSAAMMLRYSLGYGEAADAIEAAVEKTLDRGICTADIAVDRSQAVNTAEMGDAIVAAL.

75-88 is an NAD(+) binding site; sequence GPKWEHLPPAEQPE. Substrate contacts are provided by R96, R106, R135, and D224. Mg(2+)-binding residues include D224, D248, and D252. Position 282–294 (282–294) interacts with NAD(+); it reads GSAPDIAGQGIAN.

Belongs to the isocitrate and isopropylmalate dehydrogenases family. LeuB type 1 subfamily. As to quaternary structure, homodimer. It depends on Mg(2+) as a cofactor. Requires Mn(2+) as cofactor.

It localises to the cytoplasm. The enzyme catalyses (2R,3S)-3-isopropylmalate + NAD(+) = 4-methyl-2-oxopentanoate + CO2 + NADH. Its pathway is amino-acid biosynthesis; L-leucine biosynthesis; L-leucine from 3-methyl-2-oxobutanoate: step 3/4. Its function is as follows. Catalyzes the oxidation of 3-carboxy-2-hydroxy-4-methylpentanoate (3-isopropylmalate) to 3-carboxy-4-methyl-2-oxopentanoate. The product decarboxylates to 4-methyl-2 oxopentanoate. The sequence is that of 3-isopropylmalate dehydrogenase from Desulfotalea psychrophila (strain LSv54 / DSM 12343).